Reading from the N-terminus, the 892-residue chain is Alanine--tRNA ligase (892 aa).

Zn(2+) is bound by residues His596, His600, Cys700, and His704.

It belongs to the class-II aminoacyl-tRNA synthetase family. Zn(2+) serves as cofactor.

It localises to the cytoplasm. The catalysed reaction is tRNA(Ala) + L-alanine + ATP = L-alanyl-tRNA(Ala) + AMP + diphosphate. Its function is as follows. Catalyzes the attachment of alanine to tRNA(Ala) in a two-step reaction: alanine is first activated by ATP to form Ala-AMP and then transferred to the acceptor end of tRNA(Ala). Also edits incorrectly charged Ser-tRNA(Ala) and Gly-tRNA(Ala) via its editing domain. The polypeptide is Alanine--tRNA ligase (Methanococcus vannielii (strain ATCC 35089 / DSM 1224 / JCM 13029 / OCM 148 / SB)).